The following is a 504-amino-acid chain: Maturase K (504 aa).

It belongs to the intron maturase 2 family. MatK subfamily.

The protein localises to the plastid. It localises to the chloroplast. Functionally, usually encoded in the trnK tRNA gene intron. Probably assists in splicing its own and other chloroplast group II introns. The sequence is that of Maturase K from Fagus japonica (Japanese beech).